The chain runs to 481 residues: Glutamyl-tRNA(Gln) amidotransferase subunit A (481 aa).

Residues Lys76 and Ser151 each act as charge relay system in the active site. Ser175 functions as the Acyl-ester intermediate in the catalytic mechanism.

The protein belongs to the amidase family. GatA subfamily. As to quaternary structure, heterotrimer of A, B and C subunits.

The catalysed reaction is L-glutamyl-tRNA(Gln) + L-glutamine + ATP + H2O = L-glutaminyl-tRNA(Gln) + L-glutamate + ADP + phosphate + H(+). Its function is as follows. Allows the formation of correctly charged Gln-tRNA(Gln) through the transamidation of misacylated Glu-tRNA(Gln) in organisms which lack glutaminyl-tRNA synthetase. The reaction takes place in the presence of glutamine and ATP through an activated gamma-phospho-Glu-tRNA(Gln). The polypeptide is Glutamyl-tRNA(Gln) amidotransferase subunit A (Neisseria gonorrhoeae (strain ATCC 700825 / FA 1090)).